The following is a 1835-amino-acid chain: MAQPEGVLAWNPAFRPEDNDSVATDLARLALDSKKEVSETTDLDTHASPSAEEVTEENGPIEFKAAISADTGDQGAPDFVDSNMPAADDSSKPDIEEPEEPSCDESISMQTDEPRAVEDVTENVPTENGNVDITSGLRLEEHVAEEPHYGVPENSTGLASQNDAQDLFEGADTAWMDEAEGEENGATVNGEASDTRPGFWDNLGDNERDNEDDFFNQLKTQTKPIYSPPETESRFEEGIPLLGHGAATQNDHAQKGESQLDDVFGGDEDDESGFFSEIQKPTSAEGPSHITRKSTSQVIDSLNAVSDSPFSEPSPTAVEFNNGLTVPTADGEIKKAPSEEDLAARWQAELSDDADETMPTEDDLAARWQAELDDDDDDLLLDYDTTNAQGPPEAANIDHMNDSSILQSPFGTPENPARPKMQPVSYTPHQPSTSGLLSGIPAQNTAAQPTNASMSSYFSAQAPPNPVTTRAESFAERSKEGYKSPYDLPEDLARPRRAVASSRTVVAQPGTVPQPPPRSSSIPAPPLKASTVPPAPLGTSSAAPTAPQKNFFEELPLPPPRPKSRPASSGRYTPNATVCAPSVPQSIPPPANPYSNVPGAPQSNIGPPNPPQLQQPERLDPYSNLLAPNVPSAPAVPSTASRYSPRPPGLQAGVKPPPSPRYSPAPPQSTNAAAAAPPRNRYASQPASISGQGAALQFQPRTSSPLAYHEKIHYQDQGQSEERPQLQPTAIPPPLNHSHPSEQPVSSENKGPSSADVLENMPPVSTRPQSPPKNPYAPSAYTSEFAKRAAPVSTGPPIAGMTGVLNPSTEESPFVPPRRSQTQSPSQTLSPRLSVPSLDPFQRPASVHGSTSPTRTVNPYAPAPVPTHNRAPSQVLEFIPPTDGQQLDSLERWKGAPIFKFGFGGAVISCFPKHIPRYSAGQAAPMIKSCPGEVRVSQLNDWLPAAEGIVQHPGPLKGKSKKKDLVAWLSSKIAAFENADIPDFDRLSPDATKRREEKTLLWKVIRVLVENDGVLEGSVEAQKSLRNLLFPNLQDSVPNQSLGDGFTPSTTLQPLNAPSQPDAVDPRSVDSLRDTLVLGEREKAVWAAVDKRLWGHAMIIASTMDRSVWQQVVQEFVRREVRSATSRTESLAAFYEILAGNVEESIDELVPPSARAGLQMISKVDGHGTAKNSLDGLDSWRETLGLVLSNRSPDDQRALVALGRLLLSYNRTEAAHICFILSRAAVFGGVDDPLANIVLLGVDHQRLASSAALYDDDSILLTEAYEFATSVLAGSSVSTLPHLLAFKLIHAWSLADRGRKSEAQQYCDAIAAALKATTKPSGYHNQHLFFGVDELSARLRETTSDGGSSWISRPSMEKVSGSMWAKFNSFVAGDDSDAASTGSGKAEEIGPFARVSGTPTISRSPSVSDIYGSYPVAAAQPLPGTGPSRYQPVSHYAPSASPEQLRGRSSMDSQRSSSFGYPLGQRRGSQEPSTPVDTNMFHGMPMYGSPPVAGYQSTPPQSSYMPLAPVAEDSASGAQQGPFSAYSQVSDSAPSHRPSAYAPEPFGHPFDTQGVSTTSQPDQGGYMPPASTGAYEPPSVESNTEPADGVRDESTEEDKPKKKSFMDEDDDEDLAARAAAIQKAERARRDREADEAFRKAAEADAKKPPPATEKKGWFSGWFGGKKDDNSGGGPIRAKLGEENSFYYDTELKKWVNKKDPGSAAPTRGTPPPPKGSAPPSRSMSGSGGPPPAMATPPPTGASGSRPSSSAGAPPSVSASPAPPSLGAPPPAIPRSVSTGAVLPTPPSSSAGAPPRPATSLSNASSIDDLLGAPQARKGPAARGKKKGRYVDVMAK.

Disordered stretches follow at residues 33 to 295, 378 to 866, 1040 to 1068, 1376 to 1404, 1422 to 1485, 1512 to 1682, and 1695 to 1835; these read SKKE…RKST, DLLL…APVP, QSLG…DPRS, SDAA…ISRS, LPGT…HGMP, EDSA…LGEE, and VNKK…VMAK. Residues 123 to 133 are compositionally biased toward polar residues; the sequence is NVPTENGNVDI. Residues 138 to 148 are compositionally biased toward basic and acidic residues; sequence RLEEHVAEEPH. Polar residues-rich tracts occupy residues 153–164 and 424–459; these read ENSTGLASQNDA and VSYT…SYFS. Positions 473–482 are enriched in basic and acidic residues; the sequence is SFAERSKEGY. Pro residues predominate over residues 512–526; it reads VPQPPPRSSSIPAPP. Positions 624–638 are enriched in low complexity; it reads NLLAPNVPSAPAVPS. Residues 655–667 are compositionally biased toward pro residues; that stretch reads KPPPSPRYSPAPP. Residues 668–678 are compositionally biased toward low complexity; the sequence is QSTNAAAAAPP. Polar residues predominate over residues 682 to 691; that stretch reads YASQPASISG. Residues 708 to 724 are compositionally biased toward basic and acidic residues; the sequence is YHEKIHYQDQGQSEERP. Over residues 741 to 752 the composition is skewed to polar residues; that stretch reads SEQPVSSENKGP. The segment covering 817-832 has biased composition (low complexity); sequence PRRSQTQSPSQTLSPR. 2 stretches are compositionally biased toward polar residues: residues 848–857 and 1040–1059; these read HGSTSPTRTV and QSLG…NAPS. A compositionally biased stretch (low complexity) spans 1447-1458; it reads GRSSMDSQRSSS. 2 stretches are compositionally biased toward polar residues: residues 1516-1533 and 1553-1562; these read SGAQ…SDSA and QGVSTTSQPD. Composition is skewed to basic and acidic residues over residues 1588–1606 and 1623–1656; these read DGVR…KSFM and KAER…EKKG. A compositionally biased stretch (pro residues) spans 1728 to 1739; it reads GPPPAMATPPPT. Over residues 1740–1759 the composition is skewed to low complexity; it reads GASGSRPSSSAGAPPSVSAS. Positions 1760–1772 are enriched in pro residues; sequence PAPPSLGAPPPAI.

The protein belongs to the SEC16 family.

It localises to the endoplasmic reticulum membrane. Involved in the initiation of assembly of the COPII coat required for the formation of transport vesicles from the endoplasmic reticulum (ER) and the selection of cargo molecules. Also involved in autophagy. The protein is COPII coat assembly protein sec16 (sec16) of Neosartorya fischeri (strain ATCC 1020 / DSM 3700 / CBS 544.65 / FGSC A1164 / JCM 1740 / NRRL 181 / WB 181) (Aspergillus fischerianus).